A 415-amino-acid chain; its full sequence is Phosphoglycerate transport system transcriptional regulatory protein PgtA (415 aa).

In terms of domain architecture, Response regulatory spans 7–121; it reads SILLIDDDVD…KLLILIEDAL (115 aa). At aspartate 56 the chain carries 4-aspartylphosphate. The region spanning 142–341 is the Sigma-54 factor interaction domain; the sequence is LIGRSEWMNQ…LANAAELFAV (200 aa). 170–177 contributes to the ATP binding site; that stretch reads GEHGTGRM. A DNA-binding region (H-T-H motif) is located at residues 385–404; that stretch reads INEVAEYLQIPRKKLYLRMK.

Phosphorylated by PgtB.

Its subcellular location is the cytoplasm. Member of the two-component regulatory system PgtB/PgtA that regulates the inducible phosphoglycerate transport system. When activated by PgtB it acts in conjunction with sigma-54 as a transcriptional activator. The chain is Phosphoglycerate transport system transcriptional regulatory protein PgtA (pgtA) from Salmonella typhimurium (strain LT2 / SGSC1412 / ATCC 700720).